Reading from the N-terminus, the 340-residue chain is Deubiquitinase SseL (340 aa).

The active site involves histidine 222. Residue cysteine 284 is the Nucleophile of the active site.

Belongs to the peptidase C79 family.

Its subcellular location is the secreted. It localises to the host cytoplasm. Its function is as follows. Effector proteins function to alter host cell physiology and promote bacterial survival in host tissues. This protease targets the host cell ubiquitin pathway by acting as a deubiquitinase in infected host cells. The sequence is that of Deubiquitinase SseL (sseL) from Salmonella arizonae (strain ATCC BAA-731 / CDC346-86 / RSK2980).